Reading from the N-terminus, the 266-residue chain is NADP-dependent mannitol dehydrogenase (266 aa).

NADP(+) is bound by residues Thr31, Ile33, Asn107, and Arg140. The Proton donor role is filled by Ser159. Positions 174, 178, 206, and 208 each coordinate NADP(+). Residue Tyr174 is the Proton acceptor of the active site. Catalysis depends on Lys178, which acts as the Lowers pKa of active site Tyr.

This sequence belongs to the short-chain dehydrogenases/reductases (SDR) family. In terms of assembly, homotetramer.

The protein resides in the vacuole. The catalysed reaction is D-mannitol + NADP(+) = D-fructose + NADPH + H(+). The polypeptide is NADP-dependent mannitol dehydrogenase (Alternaria alternata (Alternaria rot fungus)).